We begin with the raw amino-acid sequence, 238 residues long: Expansin-like protein 5 (238 aa).

Positions 1 to 21 (MRINFKLILIILTSFYGIINC) are cleaved as a signal peptide. In terms of domain architecture, Expansin-like EG45 spans 45-145 (NGNCGFGKLT…VKVPCRVSGN (101 aa)). Disulfide bonds link Cys48–Cys78 and Cys81–Cys140. A glycan (N-linked (GlcNAc...) asparagine) is linked at Asn89.

This sequence belongs to the expansin family. Expansin A subfamily.

It localises to the secreted. May serve to lubricate the movement of the cellulose microfibrils during cell growth and wall extension and/or may serve to maintain the fluid state of the slug cell wall. The protein is Expansin-like protein 5 (expl5) of Dictyostelium discoideum (Social amoeba).